A 260-amino-acid polypeptide reads, in one-letter code: Imidazole glycerol phosphate synthase subunit HisF (260 aa).

Residues aspartate 11 and aspartate 130 contribute to the active site.

This sequence belongs to the HisA/HisF family. Heterodimer of HisH and HisF.

The protein localises to the cytoplasm. The enzyme catalyses 5-[(5-phospho-1-deoxy-D-ribulos-1-ylimino)methylamino]-1-(5-phospho-beta-D-ribosyl)imidazole-4-carboxamide + L-glutamine = D-erythro-1-(imidazol-4-yl)glycerol 3-phosphate + 5-amino-1-(5-phospho-beta-D-ribosyl)imidazole-4-carboxamide + L-glutamate + H(+). Its pathway is amino-acid biosynthesis; L-histidine biosynthesis; L-histidine from 5-phospho-alpha-D-ribose 1-diphosphate: step 5/9. IGPS catalyzes the conversion of PRFAR and glutamine to IGP, AICAR and glutamate. The HisF subunit catalyzes the cyclization activity that produces IGP and AICAR from PRFAR using the ammonia provided by the HisH subunit. The chain is Imidazole glycerol phosphate synthase subunit HisF from Endomicrobium trichonymphae.